A 351-amino-acid polypeptide reads, in one-letter code: Ferredoxin--NADP reductase (351 aa).

Asp-44, Gln-52, Tyr-57, Val-97, Phe-132, Asp-296, and Ser-337 together coordinate FAD.

The protein belongs to the ferredoxin--NADP reductase type 2 family. In terms of assembly, homodimer. FAD serves as cofactor.

It carries out the reaction 2 reduced [2Fe-2S]-[ferredoxin] + NADP(+) + H(+) = 2 oxidized [2Fe-2S]-[ferredoxin] + NADPH. The chain is Ferredoxin--NADP reductase from Paraburkholderia phymatum (strain DSM 17167 / CIP 108236 / LMG 21445 / STM815) (Burkholderia phymatum).